The primary structure comprises 299 residues: NAD kinase (299 aa).

Asp71 functions as the Proton acceptor in the catalytic mechanism. Residues 71-72 (DG), 145-146 (ND), Arg173, Asp175, 186-191 (TAYSLS), Ala210, and Gln248 contribute to the NAD(+) site.

It belongs to the NAD kinase family. A divalent metal cation is required as a cofactor.

It is found in the cytoplasm. It carries out the reaction NAD(+) + ATP = ADP + NADP(+) + H(+). In terms of biological role, involved in the regulation of the intracellular balance of NAD and NADP, and is a key enzyme in the biosynthesis of NADP. Catalyzes specifically the phosphorylation on 2'-hydroxyl of the adenosine moiety of NAD to yield NADP. This Bordetella pertussis (strain Tohama I / ATCC BAA-589 / NCTC 13251) protein is NAD kinase.